A 522-amino-acid polypeptide reads, in one-letter code: U4/U6 small nuclear ribonucleoprotein Prp4 (522 aa).

Positions 1 to 13 (MASSRASSTQATK) are enriched in polar residues. The tract at residues 1 to 20 (MASSRASSTQATKTKAPDDL) is disordered. K27 is subject to N6-acetyllysine. WD repeat units lie at residues 229 to 268 (GDDR…LLHT), 271 to 318 (GHNT…PVAD), 321 to 360 (GHTV…EILH), 363 to 402 (GHSM…CIMF), 405 to 444 (GHLK…CVYT), 447 to 487 (AHQN…PLKT), and 490 to 521 (GHEG…LWMA).

Component of the precatalytic spliceosome (spliceosome B complex). Component of the U4/U6-U5 tri-snRNP complex, a building block of the precatalytic spliceosome (spliceosome B complex). The U4/U6-U5 tri-snRNP complex is composed of the U4, U6 and U5 snRNAs and at least PRPF3, PRPF4, PRPF6, PRPF8, PRPF31, SNRNP200, TXNL4A, SNRNP40, SNRPB, SNRPD1, SNRPD2, SNRPD3, SNRPE, SNRPF, SNRPG, DDX23, CD2BP2, PPIH, SNU13, EFTUD2, SART1 and USP39, plus LSM2, LSM3, LSM4, LSM5, LSM6, LSM7 and LSM8. Interacts directly with PRPF18, PPIH and PRPF3. Part of a heteromeric complex containing PPIH, PRPF3 and PRPF4 that is stable in the absence of RNA. Interacts with ERCC6.

Its subcellular location is the nucleus. The protein localises to the nucleus speckle. Plays a role in pre-mRNA splicing as component of the U4/U6-U5 tri-snRNP complex that is involved in spliceosome assembly, and as component of the precatalytic spliceosome (spliceosome B complex). This is U4/U6 small nuclear ribonucleoprotein Prp4 (PRPF4) from Homo sapiens (Human).